The chain runs to 352 residues: Speedy protein E18 (352 aa).

The span at 1 to 12 (MDRTKTRFRKRG) shows a compositional bias: basic residues. Positions 1-90 (MDRTKTRFRK…EPEKELAPEP (90 aa)) are disordered. A compositionally biased stretch (polar residues) spans 16 to 39 (GKITTSRQPHPQNEQSLQRSTSGY). The span at 76-90 (DESEEEPEKELAPEP) shows a compositional bias: acidic residues.

It belongs to the Speedy/Ringo family.

The chain is Speedy protein E18 from Homo sapiens (Human).